Consider the following 126-residue polypeptide: Putative phosphotransferase enzyme IIB component UU178 (126 aa).

The helical transmembrane segment at L11–A31 threads the bilayer. The 78-residue stretch at P49–S126 folds into the PTS EIIB type-1 domain.

It to M.genitalium MG129 and M.pneumoniae MPN268.

Its subcellular location is the membrane. Its function is as follows. The phosphoenolpyruvate-dependent sugar phosphotransferase system (PTS), a major carbohydrate active -transport system, catalyzes the phosphorylation of incoming sugar substrates concomitant with their translocation across the cell membrane. This is Putative phosphotransferase enzyme IIB component UU178 from Ureaplasma parvum serovar 3 (strain ATCC 700970).